Here is a 431-residue protein sequence, read N- to C-terminus: Tol-Pal system protein TolB (431 aa).

A signal peptide spans 1-18 (MKALLLSLLLLLPVVALA). The segment at 410 to 431 (LPLRTEKGTYQTPDWSPLPQAQ) is disordered.

It belongs to the TolB family. The Tol-Pal system is composed of five core proteins: the inner membrane proteins TolA, TolQ and TolR, the periplasmic protein TolB and the outer membrane protein Pal. They form a network linking the inner and outer membranes and the peptidoglycan layer.

It is found in the periplasm. Part of the Tol-Pal system, which plays a role in outer membrane invagination during cell division and is important for maintaining outer membrane integrity. The protein is Tol-Pal system protein TolB of Myxococcus xanthus.